A 701-amino-acid polypeptide reads, in one-letter code: Elongation factor G (701 aa).

Positions 8–290 (SLYRNIGISA…AVVELLPAPT (283 aa)) constitute a tr-type G domain. Residues 17–24 (AHIDAGKT), 88–92 (DTPGH), and 142–145 (NKMD) contribute to the GTP site.

This sequence belongs to the TRAFAC class translation factor GTPase superfamily. Classic translation factor GTPase family. EF-G/EF-2 subfamily.

The protein resides in the cytoplasm. Functionally, catalyzes the GTP-dependent ribosomal translocation step during translation elongation. During this step, the ribosome changes from the pre-translocational (PRE) to the post-translocational (POST) state as the newly formed A-site-bound peptidyl-tRNA and P-site-bound deacylated tRNA move to the P and E sites, respectively. Catalyzes the coordinated movement of the two tRNA molecules, the mRNA and conformational changes in the ribosome. This is Elongation factor G from Neisseria gonorrhoeae (strain ATCC 700825 / FA 1090).